The primary structure comprises 427 residues: 12-alpha,13-alpha-dihydroxyfumitremorgin C prenyltransferase (427 aa).

Substrate is bound at residue Glu-94. The dimethylallyl diphosphate site is built by Arg-105, Lys-192, Tyr-194, Tyr-268, Gln-353, Tyr-355, Tyr-419, and Tyr-423.

This sequence belongs to the tryptophan dimethylallyltransferase family.

The enzyme catalyses 12alpha,13alpha-dihydroxyfumitremorgin C + dimethylallyl diphosphate = fumitremorgin B + diphosphate. Its pathway is mycotoxin biosynthesis. Its function is as follows. 12-alpha,13-alpha-dihydroxyfumitremorgin C prenyltransferase; part of the gene cluster that mediates the biosynthesis of fumitremorgins, indole alkaloids that carry not only intriguing chemical structures, but also interesting biological and pharmacological activities. The biosynthesis of fumitremorgin-type alkaloids begins by condensation of the two amino acids L-tryptophan and L-proline to brevianamide F, catalyzed by the non-ribosomal peptide synthetase ftmA. Brevianamide F is then prenylated by the prenyltransferase ftmPT1/ftmB in the presence of dimethylallyl diphosphate, resulting in the formation of tryprostatin B. The three cytochrome P450 monooxygenases, ftmP450-1/ftmC, ftmP450-2/ftmE and ftmP450-3/FtmG, are responsible for the conversion of tryprostatin B to 6-hydroxytryprostatin B, tryprostatin A to fumitremorgin C and fumitremorgin C to 12,13-dihydroxyfumitremorgin C, respectively. The putative methyltransferase ftmMT/ftmD is expected for the conversion of 6-hydroxytryprostatin B to tryprostatin A. FtmPT2/FtmH catalyzes the prenylation of 12,13-dihydroxyfumitre-morgin C in the presence of dimethylallyl diphosphate, resulting in the formation of fumitremorgin B. Fumitremorgin B is further converted to verruculogen by ftmOx1/ftmF via the insertion of an endoperoxide bond between the two prenyl moieties. In some fungal species, verruculogen is further converted to fumitremorgin A, but the enzymes involved in this step have not been identified yet. This Aspergillus fumigatus (strain ATCC MYA-4609 / CBS 101355 / FGSC A1100 / Af293) (Neosartorya fumigata) protein is 12-alpha,13-alpha-dihydroxyfumitremorgin C prenyltransferase.